Reading from the N-terminus, the 130-residue chain is Nascent polypeptide-associated complex protein (130 aa).

Residues 8–75 (PKMMRQMQKM…AKNIKKDDIK (68 aa)) form the NAC-A/B domain.

Belongs to the NAC-alpha family. In terms of assembly, homodimer. Interacts with the ribosome. Binds ribosomal RNA.

Functionally, contacts the emerging nascent chain on the ribosome. In Methanococcus aeolicus (strain ATCC BAA-1280 / DSM 17508 / OCM 812 / Nankai-3), this protein is Nascent polypeptide-associated complex protein.